The chain runs to 332 residues: UPF0285 protein MK0078 (332 aa).

It belongs to the UPF0285 family.

This Methanopyrus kandleri (strain AV19 / DSM 6324 / JCM 9639 / NBRC 100938) protein is UPF0285 protein MK0078.